Consider the following 299-residue polypeptide: UDP-N-acetylenolpyruvoylglucosamine reductase (299 aa).

An FAD-binding PCMH-type domain is found at 28 to 193 (IGGPVDLMVL…VSALMQLHKE (166 aa)). The active site involves arginine 172. Serine 222 acts as the Proton donor in catalysis. Glutamate 292 is a catalytic residue.

Belongs to the MurB family. FAD serves as cofactor.

It is found in the cytoplasm. It carries out the reaction UDP-N-acetyl-alpha-D-muramate + NADP(+) = UDP-N-acetyl-3-O-(1-carboxyvinyl)-alpha-D-glucosamine + NADPH + H(+). Its pathway is cell wall biogenesis; peptidoglycan biosynthesis. In terms of biological role, cell wall formation. This chain is UDP-N-acetylenolpyruvoylglucosamine reductase, found in Syntrophomonas wolfei subsp. wolfei (strain DSM 2245B / Goettingen).